A 47-amino-acid polypeptide reads, in one-letter code: Thionin (47 aa).

Intrachain disulfides connect Cys3-Cys41, Cys4-Cys33, Cys12-Cys31, and Cys16-Cys27.

It belongs to the plant thionin (TC 1.C.44) family. 4 C-C subfamily.

The protein localises to the secreted. Thionins are small plant proteins which are toxic to animal cells. They seem to exert their toxic effect at the level of the cell membrane. Their precise function is not known. This Pyrularia pubera (Buffalo nut) protein is Thionin (THI1).